The chain runs to 154 residues: Cytochrome c' (154 aa).

Residues 1-23 (MKHVLASTAAGLMALGLASSAIA) form the signal peptide. Heme c-binding residues include Arg35, Gln36, Arg95, Cys144, Cys147, and His148.

In terms of assembly, homodimer. Binds 1 heme c group covalently per subunit.

In terms of biological role, cytochrome c' is the most widely occurring bacterial c-type cytochrome. Cytochromes c' are high-spin proteins and the heme has no sixth ligand. Their exact function is not known. This is Cytochrome c' (cycA) from Allochromatium vinosum (strain ATCC 17899 / DSM 180 / NBRC 103801 / NCIMB 10441 / D) (Chromatium vinosum).